The primary structure comprises 141 residues: Cystatin (141 aa).

The signal sequence occupies residues 1–26 (MVHSQLPVAAPLRLLCALLLLPSATM). Residues 29-129 (GGLSPRSVTD…CHFQVWSRPW (101 aa)) form the Cystatin domain. Positions 73-77 (QVVAG) match the Secondary area of contact motif. 2 disulfides stabilise this stretch: cysteine 91-cysteine 107 and cysteine 120-cysteine 140.

Belongs to the cystatin family. In terms of tissue distribution, expressed at a low level by the venom gland (at protein level).

It localises to the secreted. Functionally, inhibits various C1 cysteine proteases including cathepsin L, papain and cathepsin B. This protein has no toxic activity and its function in the venom is unknown. It may play a role as a housekeeping or regulatory protein. The protein is Cystatin of Pseudonaja textilis (Eastern brown snake).